We begin with the raw amino-acid sequence, 387 residues long: Alkanesulfonate monooxygenase (387 aa).

The protein belongs to the SsuD family.

It carries out the reaction an alkanesulfonate + FMNH2 + O2 = an aldehyde + FMN + sulfite + H2O + 2 H(+). Its function is as follows. Catalyzes the desulfonation of aliphatic sulfonates. The sequence is that of Alkanesulfonate monooxygenase from Cupriavidus necator (strain ATCC 17699 / DSM 428 / KCTC 22496 / NCIMB 10442 / H16 / Stanier 337) (Ralstonia eutropha).